The following is a 625-amino-acid chain: Low affinity potassium transport system protein Kup (625 aa).

Transmembrane regions (helical) follow at residues threonine 15–isoleucine 35, isoleucine 58–isoleucine 78, phenylalanine 103–isoleucine 123, leucine 140–isoleucine 160, isoleucine 171–isoleucine 191, phenylalanine 218–isoleucine 238, leucine 251–leucine 271, phenylalanine 282–isoleucine 302, isoleucine 340–phenylalanine 360, leucine 366–leucine 386, phenylalanine 396–isoleucine 416, and isoleucine 422–threonine 442.

Belongs to the HAK/KUP transporter (TC 2.A.72) family.

It localises to the cell membrane. It catalyses the reaction K(+)(in) + H(+)(in) = K(+)(out) + H(+)(out). In terms of biological role, responsible for the low-affinity transport of potassium into the cell. Likely operates as a K(+):H(+) symporter. The protein is Low affinity potassium transport system protein Kup of Wigglesworthia glossinidia brevipalpis.